The following is a 227-amino-acid chain: Prolactin (227 aa).

An N-terminal signal peptide occupies residues 1-28 (MDSKWSRRTGSLLLLLVSNLLLCKSTAS). Cysteine 32 and cysteine 39 are joined by a disulfide. Serine 54, serine 62, and serine 118 each carry phosphoserine. Intrachain disulfides connect cysteine 86–cysteine 202 and cysteine 219–cysteine 227.

The protein belongs to the somatotropin/prolactin family. Interacts with PRLR.

It localises to the secreted. Functionally, prolactin acts primarily on the mammary gland by promoting lactation. The sequence is that of Prolactin (PRL) from Oryctolagus cuniculus (Rabbit).